Here is a 351-residue protein sequence, read N- to C-terminus: uncharacterized protein (351 aa).

The disordered stretch occupies residues 1–61 (MNDKRKPSFQ…RDKQEVKETR (61 aa)). Basic and acidic residues-rich tracts occupy residues 16 to 38 (FQER…HFND) and 44 to 61 (RNEK…KETR).

The protein belongs to the class IV-like SAM-binding methyltransferase superfamily. RNA methyltransferase TrmH family.

This is an uncharacterized protein from Haemophilus influenzae (strain ATCC 51907 / DSM 11121 / KW20 / Rd).